A 134-amino-acid chain; its full sequence is Pro-opiomelanocortin (134 aa).

S1 bears the N-acetylserine mark. A Valine amide modification is found at V13. S31 bears the Phosphoserine mark. Basic and acidic residues-rich tracts occupy residues 43–52 and 79–104; these read LARERPEPAR and SAEK…DKRY. A disordered region spans residues 43 to 107; the sequence is LARERPEPAR…PAKDKRYGGF (65 aa).

It belongs to the POMC family. In terms of processing, specific enzymatic cleavages at paired basic residues yield the different active peptides. ACTH and MSH are produced by the pituitary gland.

Its subcellular location is the secreted. Stimulates the adrenal glands to release cortisol. Functionally, anorexigenic peptide. Increases the pigmentation of skin by increasing melanin production in melanocytes. Its function is as follows. Increases the pigmentation of skin by increasing melanin production in melanocytes. In terms of biological role, endogenous orexigenic opiate. Endogenous opiate. This chain is Pro-opiomelanocortin (POMC), found in Loxodonta africana (African elephant).